The following is a 553-amino-acid chain: Phosphomethylpyrimidine synthase (553 aa).

Residues N192, M221, Y250, H286, 306 to 308 (SRG), 347 to 350 (DGLR), and E386 each bind substrate. Zn(2+) is bound at residue H390. Y413 is a substrate binding site. A Zn(2+)-binding site is contributed by H454. Residues C534, C537, and C542 each coordinate [4Fe-4S] cluster.

This sequence belongs to the ThiC family. Homodimer. [4Fe-4S] cluster serves as cofactor.

The catalysed reaction is 5-amino-1-(5-phospho-beta-D-ribosyl)imidazole + S-adenosyl-L-methionine = 4-amino-2-methyl-5-(phosphooxymethyl)pyrimidine + CO + 5'-deoxyadenosine + formate + L-methionine + 3 H(+). Its pathway is cofactor biosynthesis; thiamine diphosphate biosynthesis. Its function is as follows. Catalyzes the synthesis of the hydroxymethylpyrimidine phosphate (HMP-P) moiety of thiamine from aminoimidazole ribotide (AIR) in a radical S-adenosyl-L-methionine (SAM)-dependent reaction. The sequence is that of Phosphomethylpyrimidine synthase from Anaplasma marginale (strain St. Maries).